The primary structure comprises 299 residues: Acetylglutamate kinase (299 aa).

Substrate-binding positions include 68 to 69 (GG), Arg90, and Asn194.

It belongs to the acetylglutamate kinase family. ArgB subfamily.

It is found in the cytoplasm. The enzyme catalyses N-acetyl-L-glutamate + ATP = N-acetyl-L-glutamyl 5-phosphate + ADP. It functions in the pathway amino-acid biosynthesis; L-arginine biosynthesis; N(2)-acetyl-L-ornithine from L-glutamate: step 2/4. Functionally, catalyzes the ATP-dependent phosphorylation of N-acetyl-L-glutamate. The protein is Acetylglutamate kinase of Psychrobacter cryohalolentis (strain ATCC BAA-1226 / DSM 17306 / VKM B-2378 / K5).